The sequence spans 286 residues: MKKNKNINFKPKWLRVKSPDKYNNIYKISNYNNLNTICKSGSCPNIAECWEQGVATFMILGNICTRSCKFCGVKTGKPNKIDFYEPKKIAHNIKIMKIKHAVITSVDRDDLKDMGAIIWGKTIKAIKNINEKISLETLIPDFKGRKDLINIIVNEKPEVISHNIETVRRLTKKVRTQAKYDRSINVLKYIKLISNIRTKTGIMLGLGETEEEVIQTLKDSRNANIDIITIGQYLSPSIKHFYVKKFIPPYIFKKYENIALDMGFLYVESGPLVRSSYNAYKHIFLK.

C38, C43, C49, C64, C68, C71, and S276 together coordinate [4Fe-4S] cluster. A Radical SAM core domain is found at 50 to 265; sequence WEQGVATFMI…ENIALDMGFL (216 aa).

Belongs to the radical SAM superfamily. Lipoyl synthase family. It depends on [4Fe-4S] cluster as a cofactor.

Its subcellular location is the cytoplasm. It catalyses the reaction [[Fe-S] cluster scaffold protein carrying a second [4Fe-4S](2+) cluster] + N(6)-octanoyl-L-lysyl-[protein] + 2 oxidized [2Fe-2S]-[ferredoxin] + 2 S-adenosyl-L-methionine + 4 H(+) = [[Fe-S] cluster scaffold protein] + N(6)-[(R)-dihydrolipoyl]-L-lysyl-[protein] + 4 Fe(3+) + 2 hydrogen sulfide + 2 5'-deoxyadenosine + 2 L-methionine + 2 reduced [2Fe-2S]-[ferredoxin]. The protein operates within protein modification; protein lipoylation via endogenous pathway; protein N(6)-(lipoyl)lysine from octanoyl-[acyl-carrier-protein]: step 2/2. In terms of biological role, catalyzes the radical-mediated insertion of two sulfur atoms into the C-6 and C-8 positions of the octanoyl moiety bound to the lipoyl domains of lipoate-dependent enzymes, thereby converting the octanoylated domains into lipoylated derivatives. The chain is Lipoyl synthase from Karelsulcia muelleri (strain GWSS) (Sulcia muelleri).